We begin with the raw amino-acid sequence, 368 residues long: Flagellar P-ring protein (368 aa).

The signal sequence occupies residues 1–24 (MDKPMKRIFVVLVILLVLPQLALA).

Belongs to the FlgI family. The basal body constitutes a major portion of the flagellar organelle and consists of four rings (L,P,S, and M) mounted on a central rod.

It is found in the periplasm. The protein localises to the bacterial flagellum basal body. In terms of biological role, assembles around the rod to form the L-ring and probably protects the motor/basal body from shearing forces during rotation. In Geobacter sulfurreducens (strain ATCC 51573 / DSM 12127 / PCA), this protein is Flagellar P-ring protein.